The primary structure comprises 181 residues: Alkyl hydroperoxide reductase AhpD (181 aa).

Cys-131 (proton donor) is an active-site residue. An intrachain disulfide couples Cys-131 to Cys-134. The Cysteine sulfenic acid (-SOH) intermediate role is filled by Cys-134.

The protein belongs to the AhpD family.

It catalyses the reaction N(6)-[(R)-dihydrolipoyl]-L-lysyl-[lipoyl-carrier protein] + a hydroperoxide = N(6)-[(R)-lipoyl]-L-lysyl-[lipoyl-carrier protein] + an alcohol + H2O. Its function is as follows. Antioxidant protein with alkyl hydroperoxidase activity. Required for the reduction of the AhpC active site cysteine residues and for the regeneration of the AhpC enzyme activity. This is Alkyl hydroperoxide reductase AhpD from Azorhizobium caulinodans (strain ATCC 43989 / DSM 5975 / JCM 20966 / LMG 6465 / NBRC 14845 / NCIMB 13405 / ORS 571).